A 205-amino-acid chain; its full sequence is Adenylyl-sulfate kinase (205 aa).

Glycine 31–serine 38 lines the ATP pocket. Catalysis depends on serine 105, which acts as the Phosphoserine intermediate.

The protein belongs to the APS kinase family.

The enzyme catalyses adenosine 5'-phosphosulfate + ATP = 3'-phosphoadenylyl sulfate + ADP + H(+). The protein operates within sulfur metabolism; hydrogen sulfide biosynthesis; sulfite from sulfate: step 2/3. Catalyzes the synthesis of activated sulfate. In Shewanella putrefaciens (strain CN-32 / ATCC BAA-453), this protein is Adenylyl-sulfate kinase.